We begin with the raw amino-acid sequence, 367 residues long: UDP-N-acetylglucosamine--N-acetylmuramyl-(pentapeptide) pyrophosphoryl-undecaprenol N-acetylglucosamine transferase (367 aa).

UDP-N-acetyl-alpha-D-glucosamine-binding positions include 15–17 (TGG), Asn127, Arg163, Ser191, Ile249, and Gln294.

Belongs to the glycosyltransferase 28 family. MurG subfamily.

The protein resides in the cell inner membrane. It carries out the reaction di-trans,octa-cis-undecaprenyl diphospho-N-acetyl-alpha-D-muramoyl-L-alanyl-D-glutamyl-meso-2,6-diaminopimeloyl-D-alanyl-D-alanine + UDP-N-acetyl-alpha-D-glucosamine = di-trans,octa-cis-undecaprenyl diphospho-[N-acetyl-alpha-D-glucosaminyl-(1-&gt;4)]-N-acetyl-alpha-D-muramoyl-L-alanyl-D-glutamyl-meso-2,6-diaminopimeloyl-D-alanyl-D-alanine + UDP + H(+). It functions in the pathway cell wall biogenesis; peptidoglycan biosynthesis. In terms of biological role, cell wall formation. Catalyzes the transfer of a GlcNAc subunit on undecaprenyl-pyrophosphoryl-MurNAc-pentapeptide (lipid intermediate I) to form undecaprenyl-pyrophosphoryl-MurNAc-(pentapeptide)GlcNAc (lipid intermediate II). This Burkholderia multivorans (strain ATCC 17616 / 249) protein is UDP-N-acetylglucosamine--N-acetylmuramyl-(pentapeptide) pyrophosphoryl-undecaprenol N-acetylglucosamine transferase.